Consider the following 150-residue polypeptide: Large ribosomal subunit protein bL9 (150 aa).

The protein belongs to the bacterial ribosomal protein bL9 family.

In terms of biological role, binds to the 23S rRNA. The sequence is that of Large ribosomal subunit protein bL9 from Delftia acidovorans (strain DSM 14801 / SPH-1).